The chain runs to 294 residues: tRNA-cytidine(32) 2-sulfurtransferase (294 aa).

Residues Ser-58 to Ser-63 carry the PP-loop motif motif. [4Fe-4S] cluster is bound by residues Cys-133, Cys-136, and Cys-224.

The protein belongs to the TtcA family. As to quaternary structure, homodimer. The cofactor is Mg(2+). It depends on [4Fe-4S] cluster as a cofactor.

It localises to the cytoplasm. It carries out the reaction cytidine(32) in tRNA + S-sulfanyl-L-cysteinyl-[cysteine desulfurase] + AH2 + ATP = 2-thiocytidine(32) in tRNA + L-cysteinyl-[cysteine desulfurase] + A + AMP + diphosphate + H(+). The protein operates within tRNA modification. Catalyzes the ATP-dependent 2-thiolation of cytidine in position 32 of tRNA, to form 2-thiocytidine (s(2)C32). The sulfur atoms are provided by the cysteine/cysteine desulfurase (IscS) system. The chain is tRNA-cytidine(32) 2-sulfurtransferase from Ruegeria pomeroyi (strain ATCC 700808 / DSM 15171 / DSS-3) (Silicibacter pomeroyi).